A 156-amino-acid polypeptide reads, in one-letter code: Small ribosomal subunit protein uS7c (156 aa).

This sequence belongs to the universal ribosomal protein uS7 family. In terms of assembly, part of the 30S ribosomal subunit.

It is found in the plastid. The protein localises to the chloroplast. Its function is as follows. One of the primary rRNA binding proteins, it binds directly to 16S rRNA where it nucleates assembly of the head domain of the 30S subunit. This Euglena gracilis protein is Small ribosomal subunit protein uS7c (rps7).